Reading from the N-terminus, the 428-residue chain is Putative aminotransferase MSMEG_6286/MSMEI_6121 (428 aa).

A substrate-binding site is contributed by Gly37. Pyridoxal 5'-phosphate-binding positions include Tyr72, 102–105 (ASLE), Asn191, 222–225 (AYAV), and 256–258 (STS). Lys339 is covalently cross-linked (Isoglutamyl lysine isopeptide (Lys-Gln) (interchain with Q-Cter in protein Pup)).

It belongs to the class-I pyridoxal-phosphate-dependent aminotransferase family. Requires pyridoxal 5'-phosphate as cofactor.

The chain is Putative aminotransferase MSMEG_6286/MSMEI_6121 from Mycolicibacterium smegmatis (strain ATCC 700084 / mc(2)155) (Mycobacterium smegmatis).